A 284-amino-acid chain; its full sequence is Nucleotide-binding protein SPO0713 (284 aa).

3–10 (GPSGAGRS) contributes to the ATP binding site. 50–53 (DARN) contacts GTP.

This sequence belongs to the RapZ-like family.

Functionally, displays ATPase and GTPase activities. This chain is Nucleotide-binding protein SPO0713, found in Ruegeria pomeroyi (strain ATCC 700808 / DSM 15171 / DSS-3) (Silicibacter pomeroyi).